The following is a 177-amino-acid chain: Pyruvate synthase subunit PorC (177 aa).

As to quaternary structure, heterotetramer of one alpha, one beta, one delta and one gamma chain.

The catalysed reaction is 2 oxidized [2Fe-2S]-[ferredoxin] + pyruvate + CoA = 2 reduced [2Fe-2S]-[ferredoxin] + acetyl-CoA + CO2 + H(+). The chain is Pyruvate synthase subunit PorC (porC) from Methanothermobacter marburgensis (strain ATCC BAA-927 / DSM 2133 / JCM 14651 / NBRC 100331 / OCM 82 / Marburg) (Methanobacterium thermoautotrophicum).